A 964-amino-acid polypeptide reads, in one-letter code: DNA mismatch repair protein MSH2 (964 aa).

Residue glycine 688–serine 695 participates in ATP binding. The tract at residues aspartate 851–leucine 964 is interaction with MSH6.

This sequence belongs to the DNA mismatch repair MutS family. Heterodimer consisting of MSH2-MSH6 (MutS alpha) or MSH2-MSH3 (MutS beta). Both heterodimers form a ternary complex with MutL alpha (MLH1-PMS1). MutS beta also forms a ternary complex with MutL beta (MLH1-MLH3), and possibly with a MLH1-MLH2 heterodimer. Both heterodimers interact with proliferating cell nuclear antigen (PCNA/POL30). This interaction is disrupted upon binding of the MutS heterodimers to mismatch DNA. Interacts with SAW1.

The protein resides in the nucleus. With respect to regulation, inhibited by Cd(2+). Functionally, component of the post-replicative DNA mismatch repair system (MMR). Forms two different heterodimers: MutS alpha (MSH2-MSH6 heterodimer) and MutS beta (MSH2-MSH3 heterodimer), which bind to DNA mismatches thereby initiating DNA repair. MSH2 seems to act as a scaffold for the other MutS homologs that provide substrate-binding and substrate specificity. When bound, heterodimers bend the DNA helix and shield approximately 20 base pairs. MutS alpha acts mainly to repair base-base and single insertion-deletion mismatches that occur during replication, but can also repair longer insertion-deletion loops (IDLs), although with decreasing efficiency as the size of the extrahelical loop increases. MutS beta acts mainly to repair IDLs from 2 to 13 nucleotides in size, but can also repair base-base and single insertion-deletion mismatches. After mismatch binding, MutS alpha or beta form a ternary complex with a MutL heterodimer, which is thought to be responsible for directing the downstream MMR events, including strand discrimination, excision, and resynthesis. ATP binding and hydrolysis play a pivotal role in mismatch repair functions. Both subunits bind ATP, but with differing affinities, and their ATPase kinetics are also very different. MSH6 binds and hydrolyzes ATP rapidly, whereas MSH2 catalyzes ATP at a substantially slower rate. Binding to a mismatched base pair suppresses MSH6-catalyzed ATP hydrolysis, but not the activity of MSH2. ATP binding to both subunits is necessary to trigger a change in MutS alpha interaction with mismatched DNA, converting MutS alpha into a sliding clamp capable of hydrolysis-independent movement along DNA, and also facilitates formation of ternary complexes containing MutS and MutL proteins and the mismatch. MutS beta also has a role in regulation of heteroduplex formation during mitotic and meiotic recombination. MutS beta binds to DNA flap structures predicted to form during recombination, and is required for 3' non-homologous tail removal (NHTR). MutS beta-binding alters the DNA conformation of its substrate at the ds/ssDNA junction and may facilitate its recognition and/or cleavage by the downstream nucleotide excision repair (NER) RAD1-RAD10 endonuclease. This is DNA mismatch repair protein MSH2 (MSH2) from Saccharomyces cerevisiae (strain ATCC 204508 / S288c) (Baker's yeast).